The primary structure comprises 144 residues: Maximins 3/H16 (144 aa).

The signal sequence occupies residues 1–18 (MNFKYIVAVSFLIASAYA). 2 propeptides span residues 19–43 (RSVQNDEQSLSQRDVLEEESLREIR) and 73–122 (RTAE…KKEK). Isoleucine 143 bears the Isoleucine amide mark.

This sequence belongs to the bombinin family. Expressed by the skin glands.

The protein localises to the secreted. Maximin-3 shows antibacterial activity against both Gram-positive and Gram-negative bacteria. It also shows antimicrobial activity against the fungus C.albicans, but not against A.flavus nor P.uticale. It has little hemolytic activity. It possess a significant cytotoxicity against tumor cell lines. It possess a significant anti-HIV activity. It shows high spermicidal activity. Functionally, maximin-H16 shows antimicrobial activity against bacteria and against the fungus C.albicans. Shows strong hemolytic activity. This is Maximins 3/H16 from Bombina maxima (Giant fire-bellied toad).